Here is a 541-residue protein sequence, read N- to C-terminus: Putative transferase YhbX (541 aa).

The Periplasmic segment spans residues 1 to 60 (MTVFNKFARTFKSHWLLYLCVIVFGITNLVASSGAHMVQRLLFFVLTILVVKRISSLPLR). Residues 61 to 81 (LLVAAPFVLLTAADMSISLYS) traverse the membrane as a helical segment. At 82–110 (WCTFGTTFNDGFAISVLQSDPDEVVKMLG) the chain is on the cytoplasmic side. Residues 111–131 (MYIPYLCAFAFLSLLFLAVII) form a helical membrane-spanning segment. The Periplasmic portion of the chain corresponds to 132–141 (KYDVSLPTKK). The helical transmembrane segment at 142–162 (VTGILLLIVISGSLFSACQFA) threads the bilayer. The Cytoplasmic segment spans residues 163–264 (YKDAKNKKAF…RKQIKLFNQA (102 aa)). A helical transmembrane segment spans residues 265-285 (ISGAPYTALSVPLSLTADSVL). Residues 286 to 541 (SHDIHNYPDN…QGNPTPEGQG (256 aa)) are Periplasmic-facing.

It belongs to the phosphoethanolamine transferase family.

The protein localises to the cell inner membrane. Functionally, probably does not transfer phosphoethanolamine to lipid A. This chain is Putative transferase YhbX (yhbX), found in Escherichia coli (strain K12).